The primary structure comprises 247 residues: Oocyte zinc finger protein XlCOF20 (247 aa).

C2H2-type zinc fingers lie at residues 6–28 (YDCRECGKRYTKRNNLYIHQRVH), 34–56 (FPCTECGKGFSHKSQLIIHQRVH), 62–84 (FICSECGKGFSKNYGLILHLRVH), 90–112 (FVCTECGQRFSKNNVLSMHQRVH), 118–140 (FTCTECGKRFSQKRQLNLHLRVH), 146–168 (FVCTECGKRFSKNDVLLIHLRVH), 174–196 (FMCADCGRCFSVSSSLKYHQRIC), and 225–247 (QSCAECGKCFSSNYNLSLHMRVH).

The protein belongs to the krueppel C2H2-type zinc-finger protein family.

Its subcellular location is the nucleus. May be involved in transcriptional regulation. The sequence is that of Oocyte zinc finger protein XlCOF20 from Xenopus laevis (African clawed frog).